The chain runs to 383 residues: Putative glutamate--cysteine ligase 2 (383 aa).

Belongs to the glutamate--cysteine ligase type 2 family. YbdK subfamily.

It carries out the reaction L-cysteine + L-glutamate + ATP = gamma-L-glutamyl-L-cysteine + ADP + phosphate + H(+). Functionally, ATP-dependent carboxylate-amine ligase which exhibits weak glutamate--cysteine ligase activity. The polypeptide is Putative glutamate--cysteine ligase 2 (Clavibacter sepedonicus (Clavibacter michiganensis subsp. sepedonicus)).